The primary structure comprises 780 residues: Cullin-5 (780 aa).

S34 carries the phosphoserine modification. T210 is subject to Phosphothreonine. Residues 711-772 (RILRTQEAII…HKYIRRDEAD (62 aa)) enclose the Cullin neddylation domain. A Glycyl lysine isopeptide (Lys-Gly) (interchain with G-Cter in NEDD8) cross-link involves residue K724.

It belongs to the cullin family. In terms of assembly, component of multiple cullin-5-RING E3 ubiquitin-protein ligase complexes (ECS complexes, also named CRL5 complexes) formed of CUL5, Elongin BC (ELOB and ELOC), RNF7/RBX2 and a variable SOCS box domain-containing protein as substrate-specific recognition component. CUL5-containing ECS complexes specifically contain RNF7/RBX2, and not RBX1, as catalytic subunit. Component of the ECS(ASB2) complex with the substrate recognition component ASB2. Component of the ECS(ASB6) complex with the substrate recognition component ASB6. Component of the ECS(ASB7) complex with the substrate recognition component ASB7. Component of the ECS(ASB9) complex with the substrate recognition component ASB9. Component of the ECS(ASB11) complex with the substrate recognition component ASB11. Component of the ECS(ASB12) complex with the substrate recognition component ASB12. Component of the ECS(LRRC41) complex with the substrate recognition component LRRC41. Component of the ECS(SOCS1) complex with the substrate recognition component SOCS1. Component of the ECS(SOCS2) complex with the substrate recognition component SOCS2. Component of the ECS(WSB1) complex with the substrate recognition subunit WSB1. Component of the ECS(SOCS3) complex with the substrate recognition component SOCS3. Component of the ECS(SOCS7) complex with the substrate recognition component SOCS7. Component of the ECS(SPSB1) complex with the substrate recognition component SPSB1. Component of the ECS(SPSB3) complex with the substrate recognition component SPSB3. Component of the ECS(SPSB2) complex with the substrate recognition component SPSB2. Component of the ECS(SPSB4) complex with the substrate recognition component SPSB4. Component of the ECS(RAB40) complex with the substrate recognition subunit RAB40A, RAB40B or RAB40C. Component of the ECS(KLHDC1) complex with the substrate recognition component KLHDC1. Component of the ECS(PCMTD1) complex with the substrate recognition subunit PCMTD1. May also form complexes containing RBX1 and ELOA or VHL; additional evidence is however required to confirm this result in vivo. Interacts (when neddylated) with ARIH2; leading to activate the E3 ligase activity of ARIH2. Interacts with ERCC6; the interaction is induced by DNA damaging agents or inhibitors of RNA polymerase II elongation. Interacts with ELOA (via the BC-box). Interacts (unneddylated form) with DCUN1D1, DCUN1D2, DCUN1D3, DCUN1D4 and DCUN1D5; these interactions promote the cullin neddylation. In terms of processing, neddylated; which enhances the ubiquitination activity of ECS complexes and prevents binding of the inhibitor CAND1. Deneddylated via its interaction with the COP9 signalosome (CSN).

The protein resides in the nucleus. The protein operates within protein modification; protein ubiquitination. Functionally, core component of multiple cullin-5-RING E3 ubiquitin-protein ligase complexes (ECS complexes, also named CRL5 complexes), which mediate the ubiquitination and subsequent proteasomal degradation of target proteins. Acts a scaffold protein that contributes to catalysis through positioning of the substrate and the ubiquitin-conjugating enzyme. The functional specificity of the E3 ubiquitin-protein ligase complex depends on the variable SOCS box-containing substrate recognition component. Acts as a key regulator of neuron positioning during cortex development: component of various SOCS-containing ECS complexes, such as the ECS(SOCS7) complex, that regulate reelin signaling by mediating ubiquitination and degradation of DAB1. ECS(SOCS1) seems to direct ubiquitination of JAK2. The ECS(SOCS2) complex mediates the ubiquitination and subsequent proteasomal degradation of phosphorylated EPOR and GHR. The ECS(SPSB3) complex catalyzes ubiquitination of nuclear CGAS. ECS(KLHDC1) complex is part of the DesCEND (destruction via C-end degrons) pathway and mediates ubiquitination and degradation of truncated SELENOS selenoprotein produced by failed UGA/Sec decoding, which ends with a glycine. The ECS(ASB9) complex mediates ubiquitination and degradation of CKB. As part of some ECS complex, promotes 'Lys-11'-linked ubiquitination and degradation of BTRC. As part of a multisubunit ECS complex, polyubiquitinates monoubiquitinated POLR2A. As part of the ECS(RAB40C) complex, mediates ANKRD28 ubiquitination and degradation, thereby regulating protein phosphatase 6 (PP6) complex activity and focal adhesion assembly during cell migration. As part of the ECS(RAB40A) complex, mediates RHOU 'Lys-48'-linked ubiquitination and degradation, thus inhibiting focal adhesion disassembly during cell migration. As part of the ECS(RAB40B) complex, mediates LIMA1/EPLIN and RAP2 ubiquitination, thereby regulating actin cytoskeleton dynamics and stress fiber formation during cell migration. May form a cell surface vasopressin receptor. The protein is Cullin-5 of Rattus norvegicus (Rat).